The sequence spans 495 residues: Protein painting of fourth (495 aa).

Positions 1-51 are disordered; it reads MDSKRAALESGDGPDAKRLDTTDDQDKEASGGDGSQVMLAKHVAPYTGHGC. Positions 215 to 289 constitute an RRM domain; the sequence is CSLYVGNIPF…RTLTVRYRRL (75 aa). The span at 332-342 shows a compositional bias: low complexity; that stretch reads ISDSDNCSDSS. Disordered regions lie at residues 332–358, 432–451, and 461–495; these read ISDSDNCSDSSGNGKEDGKRKKKINEQ, PVPATKPTTQAQDDSQKKAK, and GPFRRGTSAMKTADEYEKDDRLEELYAQLERDPDP. The segment covering 345–358 has biased composition (basic and acidic residues); it reads GKEDGKRKKKINEQ. Positions 351-367 match the Bipartite nuclear localization signal motif; that stretch reads RKKKINEQEREIEKLKR. Residues 472-495 are compositionally biased toward basic and acidic residues; it reads TADEYEKDDRLEELYAQLERDPDP.

As to quaternary structure, interacts with Zeste. In terms of tissue distribution, weakly expressed in embryos. Expression increases during larval and pupal stages. In adults, it is predominantly expressed in males, while it is weakly expressed in females.

It localises to the nucleus. It is found in the chromosome. Probable RNA-binding protein that specifically binds to the fourth chromosome and may bind an RNA that spreads the fourth chromosome. May be a reminiscence of X chromosome dosage compensation of ancestral Drosophila species in which the X and the fourth chromosomes are one single chromosome. This is Protein painting of fourth (Pof) from Drosophila melanogaster (Fruit fly).